The following is a 559-amino-acid chain: Branched-chain-amino-acid aminotransferase-like protein 2 (559 aa).

This sequence belongs to the class-IV pyridoxal-phosphate-dependent aminotransferase family.

This chain is Branched-chain-amino-acid aminotransferase-like protein 2, found in Arabidopsis thaliana (Mouse-ear cress).